The sequence spans 179 residues: Large ribosomal subunit protein uL6 (179 aa).

The protein belongs to the universal ribosomal protein uL6 family. Part of the 50S ribosomal subunit.

Its function is as follows. This protein binds to the 23S rRNA, and is important in its secondary structure. It is located near the subunit interface in the base of the L7/L12 stalk, and near the tRNA binding site of the peptidyltransferase center. In Leptospira borgpetersenii serovar Hardjo-bovis (strain JB197), this protein is Large ribosomal subunit protein uL6.